Consider the following 143-residue polypeptide: Transcription antitermination protein NusB (143 aa).

It belongs to the NusB family.

Its function is as follows. Involved in transcription antitermination. Required for transcription of ribosomal RNA (rRNA) genes. Binds specifically to the boxA antiterminator sequence of the ribosomal RNA (rrn) operons. This Anaeromyxobacter sp. (strain Fw109-5) protein is Transcription antitermination protein NusB.